Reading from the N-terminus, the 173-residue chain is Signal peptidase complex catalytic subunit SEC11 (173 aa).

Topologically, residues Met1–Gln15 are cytoplasmic. A helical; Signal-anchor for type II membrane protein transmembrane segment spans residues Ile16–Val36. Over Ser37–Glu173 the chain is Lumenal. Active-site charge relay system residues include Ser50, His89, and Asp115. The segment at Val159–Leu170 is C-terminal short (CTS) helix.

The protein belongs to the peptidase S26B family. As to quaternary structure, component of the signal peptidase complex (SPC) composed of a catalytic subunit SEC11 and three accessory subunits SPC1, SPC2 and SPC3. The complex induces a local thinning of the ER membrane which is used to measure the length of the signal peptide (SP) h-region of protein substrates. This ensures the selectivity of the complex towards h-regions shorter than 18-20 amino acids. SPC associates with the translocon complex.

Its subcellular location is the endoplasmic reticulum membrane. It carries out the reaction Cleavage of hydrophobic, N-terminal signal or leader sequences from secreted and periplasmic proteins.. Catalytic component of the signal peptidase complex (SPC) which catalyzes the cleavage of N-terminal signal sequences from nascent proteins as they are translocated into the lumen of the endoplasmic reticulum. Specifically cleaves N-terminal signal peptides that contain a hydrophobic alpha-helix (h-region) shorter than 18-20 amino acids. The chain is Signal peptidase complex catalytic subunit SEC11 (SEC11) from Leptosphaeria maculans (strain JN3 / isolate v23.1.3 / race Av1-4-5-6-7-8) (Blackleg fungus).